A 361-amino-acid chain; its full sequence is MGQPIAIEVRNVSKRYSDDPGLAPALDNVSVNIADNEFFTLLGPSGCGKTTLLRAIAGFEHVSDGEIRLAGETVNHLPPFKRRVNTVFQSYALFPHMSVAQNIAFGLEMQGLDRKTIPGRVDEMLALVQMEHLAGRKPAQLSGGQQQRVALARALAPKPKVLLLDEPLSALDLKLRKEMQVELKRVQQEAGITFIFVTHDQEEALTLSDRIAVMSAGKILQIGTPIDIYERPQHRFVAQFIGDINFLPGQLKRGEHNENIFVPNGMPVEIPCPPQGVNGSSVQLAFRPERSQLVAADQPHHLRGVIEAVLYVGTATLYQCRLNNDIKVMLRENNEGLNRGRAVGEPVAVHLPPQACLLMEA.

An ABC transporter domain is found at 7-241; that stretch reads IEVRNVSKRY…PQHRFVAQFI (235 aa). Residue 43–50 participates in ATP binding; it reads GPSGCGKT.

Belongs to the ABC transporter superfamily. Spermidine/putrescine importer (TC 3.A.1.11.1) family. In terms of assembly, the complex is composed of two ATP-binding proteins (PotA), two transmembrane proteins (PotB and PotC) and a solute-binding protein (PotD).

It localises to the cell inner membrane. It catalyses the reaction ATP + H2O + polyamine-[polyamine-binding protein]Side 1 = ADP + phosphate + polyamineSide 2 + [polyamine-binding protein]Side 1.. In terms of biological role, part of the ABC transporter complex PotABCD involved in spermidine/putrescine import. Responsible for energy coupling to the transport system. This Pseudomonas fluorescens (strain Pf0-1) protein is Spermidine/putrescine import ATP-binding protein PotA.